Consider the following 349-residue polypeptide: DCD domain-containing protein NRP (349 aa).

The segment at 157–201 (NNNKNKGIDEDHQIQKGGKKNRKNQQNNNNQRNEDDKNNGLDKRF) is disordered. Residues 188-201 (RNEDDKNNGLDKRF) are compositionally biased toward basic and acidic residues. The region spanning 214-346 (ETIGGYIFVC…VLSLLDIFAD (133 aa)) is the DCD domain.

In terms of assembly, interacts with CRY2 in the cytoplasm. Interacts with Verticillium dahliae PevD1. Interacts with FYPP3. Highly expressed in sensecent leaves, cauline leaves and sepals. Expressed in the shoot apical meristem, leaf veins, central cylinder, root hair zone, root tips, rosette leaves, flowers and siliques.

Its subcellular location is the cytoplasm. Contributes to the initial phase of responses to abiotic and biotic stress signals. Binds FYPP3 and facilitates FYPP3 degradation to promote abscisic acid (ABA) response. The polypeptide is DCD domain-containing protein NRP (Arabidopsis thaliana (Mouse-ear cress)).